The following is a 78-amino-acid chain: Omega-conotoxin-like ArMKLT1-011 (78 aa).

The N-terminal stretch at 1–22 (MKLTCMMIVAVLFLTAWTSVTA) is a signal peptide. Positions 23 to 48 (VNTRGELENLFLRASHEMNSEASKLD) are excised as a propeptide. Cystine bridges form between C52/C69, C59/C73, and C68/C77.

It belongs to the conotoxin O1 superfamily. As to expression, expressed by the venom duct.

Its subcellular location is the secreted. Its function is as follows. Omega-conotoxins act at presynaptic membranes, they bind and block voltage-gated calcium channels (Cav). This is Omega-conotoxin-like ArMKLT1-011 from Conus arenatus (Sand-dusted cone).